A 583-amino-acid chain; its full sequence is Proteasome-associated ATPase (583 aa).

Polar residues predominate over residues 1–19 (METPNQDSGRTPTEQSAAN). The interval 1 to 22 (METPNQDSGRTPTEQSAANDLS) is disordered. Residues 24–75 (ADRQVNILRDKLRHIDRQLAAATQNNTKLVSMLETAKAEILRLKNALDQEGQ) are a coiled coil. Residue 271–276 (GCGKTL) coordinates ATP. The segment at 582-583 (YL) is docks into pockets in the proteasome alpha-ring.

It belongs to the AAA ATPase family. Homohexamer. Assembles into a hexameric ring structure that caps the 20S proteasome core. Strongly interacts with the prokaryotic ubiquitin-like protein Pup through a hydrophobic interface; the interacting region of ARC lies in its N-terminal coiled-coil domain. There is one Pup binding site per ARC hexamer ring. Upon ATP-binding, the C-terminus of ARC interacts with the alpha-rings of the proteasome core, possibly by binding to the intersubunit pockets.

The protein operates within protein degradation; proteasomal Pup-dependent pathway. Functionally, ATPase which is responsible for recognizing, binding, unfolding and translocation of pupylated proteins into the bacterial 20S proteasome core particle. May be essential for opening the gate of the 20S proteasome via an interaction with its C-terminus, thereby allowing substrate entry and access to the site of proteolysis. Thus, the C-termini of the proteasomal ATPase may function like a 'key in a lock' to induce gate opening and therefore regulate proteolysis. The sequence is that of Proteasome-associated ATPase from Pseudarthrobacter chlorophenolicus (strain ATCC 700700 / DSM 12829 / CIP 107037 / JCM 12360 / KCTC 9906 / NCIMB 13794 / A6) (Arthrobacter chlorophenolicus).